The chain runs to 161 residues: Zinc metalloproteinase/disintegrin (161 aa).

The Peptidase M12B domain occupies 1 to 72; the sequence is ERDLLVAVTM…ENPQCILNKH (72 aa). H12 lines the Zn(2+) pocket. E13 is a catalytic residue. Residues H16 and H22 each contribute to the Zn(2+) site. 2 cysteine pairs are disulfide-bonded: C27-C51 and C29-C34. Residues 73–88 constitute a propeptide that is removed on maturation; it reads LRTDTVSTPVSGNELL. The Disintegrin domain maps to 89–161; sequence EAGEECDCGT…ADCPRNRFHA (73 aa). 6 disulfide bridges follow: C94/C109, C96/C104, C103/C126, C117/C123, C122/C147, and C135/C154. The short motif at 139–141 is the Cell attachment site element; sequence RGD.

Belongs to the venom metalloproteinase (M12B) family. P-II subfamily. P-IIa sub-subfamily. In terms of assembly, monomer. In terms of tissue distribution, expressed by the venom gland.

Its subcellular location is the secreted. In terms of biological role, impairs hemostasis in the envenomed animal. Disintegrin: inhibit platelet aggregation induced by ADP, thrombin, platelet-activating factor and collagen. Acts by inhibiting fibrinogen interaction with platelet receptors GPIIb/GPIIIa (ITGA2B/ITGB3). This Bothrops jararaca (Jararaca) protein is Zinc metalloproteinase/disintegrin.